The sequence spans 426 residues: Histidine--tRNA ligase (426 aa).

Belongs to the class-II aminoacyl-tRNA synthetase family.

The protein localises to the cytoplasm. It catalyses the reaction tRNA(His) + L-histidine + ATP = L-histidyl-tRNA(His) + AMP + diphosphate + H(+). The protein is Histidine--tRNA ligase of Saccharolobus islandicus (strain M.16.27) (Sulfolobus islandicus).